The chain runs to 334 residues: N-chimaerin (334 aa).

The segment covering 1–10 has biased composition (polar residues); it reads MPSKESWSGR. The tract at residues 1 to 22 is disordered; it reads MPSKESWSGRKTNRATVHKSKQ. Thr67 bears the Phosphothreonine mark. The Phorbol-ester/DAG-type zinc finger occupies 80-130; it reads VHNFKVHTFRGPHWCEYCANFMWGLIAQGVKCADCGLNVHKQCSKMVPNDC. Positions 143–334 constitute a Rho-GAP domain; that stretch reads CDLTTLVKAH…LLIKNEDILF (192 aa). Position 215 is a phosphothreonine (Thr215).

As to quaternary structure, interacts with EPHA4; effector of EPHA4 in axon guidance linking EPHA4 activation to RAC1 regulation. In terms of processing, phosphorylated. Phosphorylation is EPHA4 kinase activity-dependent. In neurons in brain regions that are involved in learning and memory processes.

Its function is as follows. GTPase-activating protein for p21-rac and a phorbol ester receptor. Involved in the assembly of neuronal locomotor circuits as a direct effector of EPHA4 in axon guidance. In Rattus norvegicus (Rat), this protein is N-chimaerin (Chn1).